The primary structure comprises 293 residues: Deubiquitinase OTUD6B (293 aa).

2 disordered regions span residues 1-43 (MEEV…RRKQ) and 57-114 (QKHE…LEKE). The region spanning 147 to 284 (LQIKEISSDG…GEHYNSVEPL (138 aa)) is the OTU domain. Positions 152–158 (ISSDGHC) are cys-loop. The active site involves D155. C158 (nucleophile) is an active-site residue. A variable-loop region spans residues 219 to 229 (VADTAAWGGQL). The segment at 267–277 (YMRHAYGLGEH) is his-loop. Residue H277 is part of the active site.

It catalyses the reaction Thiol-dependent hydrolysis of ester, thioester, amide, peptide and isopeptide bonds formed by the C-terminal Gly of ubiquitin (a 76-residue protein attached to proteins as an intracellular targeting signal).. Deubiquitinating enzyme that may play a role in the ubiquitin-dependent regulation of different cellular processes. In Danio rerio (Zebrafish), this protein is Deubiquitinase OTUD6B (otud6b).